Reading from the N-terminus, the 5101-residue chain is Malformin synthetase mlfA (5101 aa).

Residues 225-616 are adenylation 1; the sequence is ERHAANRPHS…CGRADTQVKL (392 aa). The 74-residue stretch at 757–830 folds into the Carrier 1 domain; that stretch reads SRLEQKIQLA…EAASLAEVQE (74 aa). An O-(pantetheine 4'-phosphoryl)serine modification is found at Ser791. Positions 868-1299 are condensation 1; that stretch reads EDVFPCTTMQ…ALNTLSLLQA (432 aa). The adenylation 2 stretch occupies residues 1327–1716; sequence DRWVTRQPEG…GRKDTQVKLR (390 aa). The region spanning 1854 to 1931 is the Carrier 2 domain; the sequence is TPTLELERTL…QLAAEVGEPA (78 aa). At Ser1891 the chain carries O-(pantetheine 4'-phosphoryl)serine. 2 disordered regions span residues 1932–1961 and 1994–2020; these read GQSASSASSTTEEGFTFSTPDDSSTNDGVD and GGSSSNKTPSVSSSSSSSSSSKRKKNA. Composition is skewed to low complexity over residues 1934-1958 and 1996-2013; these read SASSASSTTEEGFTFSTPDDSSTND and SSSNKTPSVSSSSSSSSS. The segment at 2066 to 2481 is condensation 2; sequence EDIYPATALQ…AVSCSDKETL (416 aa). An adenylation 3 region spans residues 2504-2896; that stretch reads RRTPHAPAVC…IGRRDGQLKL (393 aa). Positions 3032 to 3108 constitute a Carrier 3 domain; the sequence is RPVTSQEHEM…QLICHLNTIR (77 aa). O-(pantetheine 4'-phosphoryl)serine is present on Ser3069. Condensation stretches follow at residues 3125–3590 and 3611–4030; these read WVAL…TYDQ and NIYP…EHLV. An adenylation 4 region spans residues 4055–4445; sequence HNSRQAVCAW…VGRKDNQIKF (391 aa). The region spanning 4579–4655 is the Carrier 4 domain; sequence MPSTAAERKM…DLSDQAKSLI (77 aa). Ser4616 carries the post-translational modification O-(pantetheine 4'-phosphoryl)serine. Residues 4712-5097 are condensation 5; sequence IVVDIPGPID…KIVGLLRHPE (386 aa).

Belongs to the NRP synthetase family.

It participates in secondary metabolite biosynthesis. Functionally, nonribosomal peptide synthetase; part of the gene cluster that mediates the biosynthesis of malformins, cyclic pentapeptides with a disulfide bond between 2 consecutive cysteins, that show potential anti-tumor as well as antimalarial and antitrypanosomal properties. The nonribosomal peptide synthetase mlfA is responsible of the formation of the cyclic pentapeptide. The malformin biosynthesis clusters in malformin-producing fungi also contain enzymes involved in the formation of the disulfide bond between the two consecutive cysteins within malformins, in addition to additional tailoring enzymes such as methyltransferases or oxidoreductases. They are also composed of up to 4 major facilitator superfamily transporters, and transcription factors probably involved in the regulation of the expression of those clusters. The chain is Malformin synthetase mlfA from Aspergillus kawachii (strain NBRC 4308) (White koji mold).